The chain runs to 706 residues: MNKIRSLRCLLPETITSASTAASNRGSDGSQFSVLWRHQILDPDSNIVTYWNHVFLITSILALFLDPFYFYVPYVGGPACLSIDISLAATVTFFRTVADIFHLLHIFMKFRTAFVARSSRVFGRGELVMDSREIAMRYLKTDFLIDVAAMLPLPQLVIWLVIPAATNGTANHANSTLALIVLVQYIPRSFIIFPLNQRIIKTTGFIAKTAWAGAAYNLLLYILASHVLGAMWYLSSIGRQFSCWSNVCKKDNALRVLDCLPSFLDCKSLEQPERQYWQNVTQVLSHCDATSSTTNFKFGMFAEAFTTQVATTDFVSKYLYCLWWGLRNLSSYGQNITTSVYLGETLFCITICIFGLILFTLLIGNMQSSLQSMSVRVEEWRVKRRDTEEWMRHRQLPPELQERVRRFVQYKWLATRGVDEESILHSLPTDLRREIQRHLCLSLVRRVPFFSQMDDQLLDAICGCLVSSLSTAGTYIFREGDPVNEMLFVIRGQIESSTTNGGRSGFFNSTTLRPGDFCGEELLTWALMPNSTLNLPSSTRSVRALSEVEAFALSAEDLKFVAHQFKRLQSKKLQHAFRYYSHQWRAWGACFVQSAWRRYKRRKLAKELSLHESSGYYYPDETGYNEEDEETREYYYGSDEEGGSMDNTNLGATILASKFAANTRRGTNQKASSSSTGKKDGSSTSLKMPQLFKPDEPDFSIDKEDV.

Residues 1 to 53 (MNKIRSLRCLLPETITSASTAASNRGSDGSQFSVLWRHQILDPDSNIVTYWNH) are Cytoplasmic-facing. Residues 54–74 (VFLITSILALFLDPFYFYVPY) traverse the membrane as a helical segment. Residues 75 to 86 (VGGPACLSIDIS) are Extracellular-facing. Residues 87–107 (LAATVTFFRTVADIFHLLHIF) form a helical membrane-spanning segment. Topologically, residues 108-142 (MKFRTAFVARSSRVFGRGELVMDSREIAMRYLKTD) are cytoplasmic. Residues 143–163 (FLIDVAAMLPLPQLVIWLVIP) form a helical membrane-spanning segment. Residues 164–174 (AATNGTANHAN) lie on the Extracellular side of the membrane. The chain crosses the membrane as a helical span at residues 175 to 195 (STLALIVLVQYIPRSFIIFPL). Residues 196-217 (NQRIIKTTGFIAKTAWAGAAYN) lie on the Cytoplasmic side of the membrane. A helical transmembrane segment spans residues 218–238 (LLLYILASHVLGAMWYLSSIG). At 239 to 345 (RQFSCWSNVC…ITTSVYLGET (107 aa)) the chain is on the extracellular side. A helical transmembrane segment spans residues 346–366 (LFCITICIFGLILFTLLIGNM). Residues 367-706 (QSSLQSMSVR…PDFSIDKEDV (340 aa)) lie on the Cytoplasmic side of the membrane. Residues 449–579 (FFSQ…AFRY) and E520 contribute to the a nucleoside 3',5'-cyclic phosphate site. Residues 565 to 580 (FKRLQSKKLQHAFRYY) form a calmodulin-binding region. Positions 585–614 (RAWGACFVQSAWRRYKRRKLAKELSLHESS) constitute an IQ domain. Residues 661 to 706 (ANTRRGTNQKASSSSTGKKDGSSTSLKMPQLFKPDEPDFSIDKEDV) form a disordered region. Over residues 693–706 (KPDEPDFSIDKEDV) the composition is skewed to basic and acidic residues.

Belongs to the cyclic nucleotide-gated cation channel (TC 1.A.1.5) family. Homomultimer. Interacts with CPK32. As to expression, expressed in pollen grains. Not detected in leaves, roots or root hairs.

It localises to the cell membrane. The protein localises to the cytoplasmic vesicle membrane. Cyclic nucleotide-gated ion channel required for directional pollen tube growth into the transmitting tract. Acts as a Ca(2+)-permeable divalent cation-selective channel inhibited by either lanthanum or gadolinium. Regulated by CPK32 to mediate Ca(2+) transport across the plasma membrane in response to Ca(2+) oscillation. In Arabidopsis thaliana (Mouse-ear cress), this protein is Cyclic nucleotide-gated ion channel 18.